Here is a 474-residue protein sequence, read N- to C-terminus: Trichothecene 3-O-acetyltransferase (474 aa).

This sequence belongs to the trichothecene 3-O-acetyltransferase family.

In terms of biological role, trichothecene 3-O-acetyltransferase involved in self-protection against trichothecenes, mycotoxins acting as eukaryotic protein synthesis inhibitors. Its existence is surprising in a non-trichothecene producer organism which needs no self-protection again endogenic trichothecenes. The persistence of this non-essential gene may be due to a selective advantage that it may confer, like a resistance to exogenic trichothecenes. The sequence is that of Trichothecene 3-O-acetyltransferase (AYT1) from Saccharomyces cerevisiae (strain ATCC 204508 / S288c) (Baker's yeast).